A 460-amino-acid chain; its full sequence is Probable carboxypeptidase TRV_02791 (460 aa).

Residues 1–22 (MQKTYLWALVSLLASSLVDARS) form the signal peptide. Asparagine 98 carries N-linked (GlcNAc...) asparagine glycosylation. Aspartate 175 provides a ligand contact to Zn(2+). Catalysis depends on glutamate 207, which acts as the Proton acceptor. Glutamate 208 is a binding site for Zn(2+). N-linked (GlcNAc...) asparagine glycosylation occurs at asparagine 395.

The protein belongs to the peptidase M20A family. The cofactor is Zn(2+).

It localises to the secreted. The sequence is that of Probable carboxypeptidase TRV_02791 from Trichophyton verrucosum (strain HKI 0517).